A 460-amino-acid polypeptide reads, in one-letter code: Putative arginine/ornithine antiporter (460 aa).

Residues 1–4 lie on the Cytoplasmic side of the membrane; that stretch reads MEKK. The chain crosses the membrane as a helical span at residues 5 to 25; that stretch reads LGLSALTALVLSSMLGAGVFS. At 26-38 the chain is on the periplasmic side; that stretch reads LPQNMAAVASPAA. Residues 39-59 traverse the membrane as a helical segment; the sequence is LLIGWGITGAGILLLAFAMLI. At 60 to 92 the chain is on the cytoplasmic side; the sequence is LTRIRPELDGGIFTYAREGFGELIGFCSAWGYW. A helical membrane pass occupies residues 93–113; that stretch reads LCAVIANVSYLVIVFSALSFF. Over 114–125 the chain is Periplasmic; it reads TDTPELRLFGDG. The chain crosses the membrane as a helical span at residues 126–146; the sequence is NTWQSIVGASALLWIVHFLIL. Residues 147–157 lie on the Cytoplasmic side of the membrane; that stretch reads RGVQTAASINL. The chain crosses the membrane as a helical span at residues 158–178; it reads VATLAKLLPLGLFVVLAMMMF. The Periplasmic segment spans residues 179–201; it reads KLDTFKLDFTGLALGVPVWEQVK. A helical membrane pass occupies residues 202-222; that stretch reads NTMLITLWVFIGVEGAVVVSA. The Cytoplasmic portion of the chain corresponds to 223–235; the sequence is RARNKRDVGKATL. Residues 236 to 256 form a helical membrane-spanning segment; sequence LAVLSALGVYLLVTLLSLGVV. Residues 257–282 lie on the Periplasmic side of the membrane; that stretch reads ARPELAEIRNPSMAGLMVEMMGPWGE. Residues 283-303 form a helical membrane-spanning segment; that stretch reads IIIAAGLIVSVCGAYLSWTIM. Over 304 to 331 the chain is Cytoplasmic; it reads AAEVPFLAATHKAFPRIFARQNAQAAPS. The helical transmembrane segment at 332–352 threads the bilayer; sequence ASLWLTNICVQICLVLIWLTG. Topologically, residues 353–357 are periplasmic; sequence SDYNT. A helical transmembrane segment spans residues 358–378; the sequence is LLTIASEMILVPYFLVGAFLL. Over 379–384 the chain is Cytoplasmic; that stretch reads KIATRP. Helical transmembrane passes span 385-405 and 406-426; these read LHKAVGVGACIYGLWLLYASG and PMHLLLSVVLYAPGLLVFLYA. Topologically, residues 427-439 are cytoplasmic; sequence RKTHTHDNVLNRQ. A helical membrane pass occupies residues 440 to 460; the sequence is EMVLIGMLLIASVPATWMLVG.

It belongs to the amino acid-polyamine-organocation (APC) superfamily. Basic amino acid/polyamine antiporter (APA) (TC 2.A.3.2) family.

The protein resides in the cell inner membrane. It catalyses the reaction L-ornithine(in) + L-arginine(out) = L-ornithine(out) + L-arginine(in). In terms of biological role, catalyzes electroneutral exchange between arginine and ornithine to allow high-efficiency energy conversion in the arginine deiminase pathway. The sequence is that of Putative arginine/ornithine antiporter (ydgI) from Escherichia coli O6:H1 (strain CFT073 / ATCC 700928 / UPEC).